The primary structure comprises 215 residues: Calmodulin-like protein 5 (215 aa).

The interval 38–61 (KNSPPSPSTMLPSPSSSSAPTKRI) is disordered. Over residues 45-57 (STMLPSPSSSSAP) the composition is skewed to low complexity. EF-hand domains are found at residues 61–96 (IDPS…LGIY), 97–132 (IPDK…IVDE), 139–174 (TEEE…LGLK), and 177–212 (KTLD…GGFS). Positions 74, 76, 78, 80, 85, 110, 112, 114, 116, 121, 152, 154, 156, 163, 190, 192, 194, 196, and 201 each coordinate Ca(2+).

It belongs to the calmodulin family.

Potential calcium sensor. This chain is Calmodulin-like protein 5 (CML5), found in Arabidopsis thaliana (Mouse-ear cress).